The chain runs to 210 residues: Cytochrome c oxidase subunit 2 (210 aa).

At 1 to 20 (MAFILSFWMIFLLDSVIVLL) the chain is on the mitochondrial intermembrane side. A helical transmembrane segment spans residues 21–42 (SFVCFVCVWICALLFSTVLLVS). Residues 43–60 (KLNNIYCTWDFTASKFID) lie on the Mitochondrial matrix side of the membrane. The chain crosses the membrane as a helical span at residues 61–86 (VYWFTIGGMFSLGLLLRLCLLLYFGH). Residues 87-210 (LNFVSFDLCK…GFMPIVICFI (124 aa)) are Mitochondrial intermembrane-facing. Cu cation contacts are provided by histidine 157, cysteine 192, glutamate 194, cysteine 196, histidine 200, and methionine 203. Position 194 (glutamate 194) interacts with Mg(2+).

The protein belongs to the cytochrome c oxidase subunit 2 family. Component of the cytochrome c oxidase (complex IV, CIV), a multisubunit enzyme composed of a catalytic core of 3 subunits and several supernumerary subunits. The complex exists as a monomer or a dimer and forms supercomplexes (SCs) in the inner mitochondrial membrane with ubiquinol-cytochrome c oxidoreductase (cytochrome b-c1 complex, complex III, CIII). Cu cation is required as a cofactor.

Its subcellular location is the mitochondrion inner membrane. It carries out the reaction 4 Fe(II)-[cytochrome c] + O2 + 8 H(+)(in) = 4 Fe(III)-[cytochrome c] + 2 H2O + 4 H(+)(out). Functionally, component of the cytochrome c oxidase, the last enzyme in the mitochondrial electron transport chain which drives oxidative phosphorylation. The respiratory chain contains 3 multisubunit complexes succinate dehydrogenase (complex II, CII), ubiquinol-cytochrome c oxidoreductase (cytochrome b-c1 complex, complex III, CIII) and cytochrome c oxidase (complex IV, CIV), that cooperate to transfer electrons derived from NADH and succinate to molecular oxygen, creating an electrochemical gradient over the inner membrane that drives transmembrane transport and the ATP synthase. Cytochrome c oxidase is the component of the respiratory chain that catalyzes the reduction of oxygen to water. Electrons originating from reduced cytochrome c in the intermembrane space (IMS) are transferred via the dinuclear copper A center (CU(A)) of subunit 2 and heme A of subunit 1 to the active site in subunit 1, a binuclear center (BNC) formed by heme A3 and copper B (CU(B)). The BNC reduces molecular oxygen to 2 water molecules using 4 electrons from cytochrome c in the IMS and 4 protons from the mitochondrial matrix. The sequence is that of Cytochrome c oxidase subunit 2 from Leishmania tarentolae (Sauroleishmania tarentolae).